We begin with the raw amino-acid sequence, 609 residues long: NADH-ubiquinone oxidoreductase chain 5 (609 aa).

The next 15 helical transmembrane spans lie at 6–26, 35–55, 84–104, 116–138, 140–160, 171–191, 240–260, 272–292, 300–319, 330–350, 365–385, 409–429, 456–476, 481–501, and 581–601; these read SSILMILILLTTPIIISMTNL, YATSSIKFSFLLSLLPLLLFF, YFSILFLSVALFVTWSIMQFS, RFIKYLMMFLITMLILTSANNLF, LFIGWEGVGIMSFLLIGWWYG, AILYNRVGDIGFILAMTWFCL, TPVSALLHSSTMVVAGIFLMI, IMTAMLCLGAITTLFTAICAL, IVAFSTSSQLGLMMVTLGIN, THAFFKAMLFMCSGSIIHSLN, MPFTSSCLIIGSLALTGMPFL, MITLIATSMTAVYSMRIIYFV, LALGSILAGFLISLNIPPTNI, MPWHLKMTALLITILGFAIAL, and GLIKLYFLSFLITISLIFILH.

Belongs to the complex I subunit 5 family. Core subunit of respiratory chain NADH dehydrogenase (Complex I) which is composed of 45 different subunits.

The protein localises to the mitochondrion inner membrane. It catalyses the reaction a ubiquinone + NADH + 5 H(+)(in) = a ubiquinol + NAD(+) + 4 H(+)(out). Its function is as follows. Core subunit of the mitochondrial membrane respiratory chain NADH dehydrogenase (Complex I) which catalyzes electron transfer from NADH through the respiratory chain, using ubiquinone as an electron acceptor. Essential for the catalytic activity and assembly of complex I. In Rattus norvegicus (Rat), this protein is NADH-ubiquinone oxidoreductase chain 5.